A 509-amino-acid polypeptide reads, in one-letter code: FAD-linked oxidoreductase dpmaF (509 aa).

The N-terminal stretch at 1-21 (MTRLSLQLIAGLAGQAWLVNS) is a signal peptide. The FAD-binding PCMH-type domain maps to 59–231 (LQYEPIAVAV…AEYGFETFPA (173 aa)). 3 N-linked (GlcNAc...) asparagine glycosylation sites follow: N125, N193, and N281.

It belongs to the oxygen-dependent FAD-linked oxidoreductase family. Requires FAD as cofactor.

It participates in secondary metabolite biosynthesis; terpenoid biosynthesis. Its function is as follows. FAD-linked oxidoreductase; part of the gene cluster that mediates the biosynthesis of the diterpenoid pyrones subglutinols A and B. The first step of the pathway is the synthesis of the alpha-pyrone moiety by the polyketide synthase dpmaA via condensation of one acetyl-CoA starter unit with 3 malonyl-CoA units and 2 methylations. The alpha-pyrone is then combined with geranylgeranyl pyrophosphate (GGPP) formed by the GGPP synthase dpmaD through the action of the prenyltransferase dpmaC to yield a linear alpha-pyrone diterpenoid. Subsequent steps in the diterpenoid pyrone biosynthetic pathway involve the decalin core formation, which is initiated by the epoxidation of the C10-C11 olefin by the FAD-dependent oxidoreductase dpmaE, and is followed by a cyclization cascade catalyzed by the terpene cyclase dpmaB. The dehydrogenase dpmaF is then involved in tetrahydrofuran (THF) ring formation at the C5 unit to complete the formation of subglutinols A and B. This Metarhizium anisopliae (Entomophthora anisopliae) protein is FAD-linked oxidoreductase dpmaF.